The following is a 107-amino-acid chain: Basic phospholipase A2 sphenotoxin subunit B (107 aa).

Ca(2+)-binding residues include Tyr27, Gly29, and Gly31. Cystine bridges form between Cys28–Cys44, Cys43–Cys91, Cys50–Cys88, Cys57–Cys81, and Cys75–Cys86. His47 is a catalytic residue. A Ca(2+)-binding site is contributed by Asp48. The active site involves Asp89.

Belongs to the phospholipase A2 family. Group II subfamily. D49 sub-subfamily. Heterodimer of A and B chains; non-covalently linked. The acidic protein (B chain) has phospholipase A2 activity and the A chain weakly inhibits the B chain enzymatic activity but potentiates its lethal potency. Expressed by the venom gland.

Its subcellular location is the secreted. The enzyme catalyses a 1,2-diacyl-sn-glycero-3-phosphocholine + H2O = a 1-acyl-sn-glycero-3-phosphocholine + a fatty acid + H(+). Functionally, heterodimer A-B: Sphenotoxin is a potent neurotoxin that possesses phospholipase A2 (PLA2) activity. It consists of a non-covalent association of a basic PLA2 subunit B with a non-enzymatic subunit A. Its function is as follows. Monomer B: Not found in vivo. In vitro, potent neurotoxin that possesses phospholipase A2 (PLA2) activity and exerts a lethal action by blocking neuromuscular transmission. Induces paralysis of the hind legs and neuromuscular blockade in mouse phrenic nerve-diaphragm preparations. PLA2 catalyzes the calcium-dependent hydrolysis of the 2-acyl groups in 3-sn-phosphoglycerides. This Ophryacus sphenophrys (Broad-horned pitviper) protein is Basic phospholipase A2 sphenotoxin subunit B.